A 395-amino-acid chain; its full sequence is S-adenosylmethionine synthase (395 aa).

His-12 lines the ATP pocket. A Mg(2+)-binding site is contributed by Asp-14. Glu-40 provides a ligand contact to K(+). Residues Glu-53 and Gln-96 each contribute to the L-methionine site. A flexible loop region spans residues 96–106; that stretch reads QSKEIADAVNF. ATP-binding positions include 174 to 176, 242 to 243, Asp-251, 257 to 258, Ala-274, and Lys-278; these read DGK, RF, and RK. Residue Asp-251 participates in L-methionine binding. Lys-282 contacts L-methionine.

Belongs to the AdoMet synthase family. Homotetramer; dimer of dimers. Mg(2+) serves as cofactor. K(+) is required as a cofactor.

The protein localises to the cytoplasm. It carries out the reaction L-methionine + ATP + H2O = S-adenosyl-L-methionine + phosphate + diphosphate. The protein operates within amino-acid biosynthesis; S-adenosyl-L-methionine biosynthesis; S-adenosyl-L-methionine from L-methionine: step 1/1. Catalyzes the formation of S-adenosylmethionine (AdoMet) from methionine and ATP. The overall synthetic reaction is composed of two sequential steps, AdoMet formation and the subsequent tripolyphosphate hydrolysis which occurs prior to release of AdoMet from the enzyme. The protein is S-adenosylmethionine synthase of Tropheryma whipplei (strain Twist) (Whipple's bacillus).